The primary structure comprises 262 residues: Flap endonuclease Xni (262 aa).

A Mg(2+)-binding site is contributed by Asp105. A 5'-3' exonuclease domain is found at 162–257 (ERSQFLDLMA…FRVIDSPPEK (96 aa)). Residues Leu172, Ala173, Pro181, Ile183, and Ile186 each contribute to the K(+) site. The segment at 185-190 (GIGPKS) is interaction with DNA.

This sequence belongs to the Xni family. Mg(2+) is required as a cofactor. The cofactor is K(+).

Its function is as follows. Has flap endonuclease activity. During DNA replication, flap endonucleases cleave the 5'-overhanging flap structure that is generated by displacement synthesis when DNA polymerase encounters the 5'-end of a downstream Okazaki fragment. The sequence is that of Flap endonuclease Xni from Shewanella baltica (strain OS223).